The primary structure comprises 362 residues: Glycyl-glycine endopeptidase ALE-1 (362 aa).

Positions 1-35 are cleaved as a signal peptide; it reads MDTNRKFTLVKSLSIGLGTFLVGSVFLTVNDEASA. Residues 35–110 are disordered; the sequence is ASTKVDAPKV…PAKADAPKVE (76 aa). A compositionally biased stretch (basic and acidic residues) spans 40–110; sequence DAPKVEQEAP…PAKADAPKVE (71 aa). 2 residues coordinate Zn(2+): H150 and D154. H231 is an active-site residue. Position 233 (H233) interacts with Zn(2+). Positions 282–350 constitute an SH3b domain; the sequence is SESASFTANT…YLPVRTWNES (69 aa).

It belongs to the peptidase M23B family. Requires Zn(2+) as cofactor.

The protein resides in the secreted. The enzyme catalyses Hydrolysis of the -Gly-|-Gly- bond in the pentaglycine inter-peptide link joining staphylococcal cell wall peptidoglycans.. Its function is as follows. Lyses staphylococcal cells by hydrolyzing the polyglycine interpeptide bridges of the peptidoglycan. This is Glycyl-glycine endopeptidase ALE-1 from Staphylococcus capitis.